A 328-amino-acid polypeptide reads, in one-letter code: ATP-dependent 6-phosphofructokinase (328 aa).

Residue Gly11 participates in ATP binding. Position 21-25 (21-25 (RAAVR)) interacts with ADP. ATP-binding positions include 72-73 (RS) and 102-105 (GNGT). Asn103 provides a ligand contact to Mg(2+). Residue 126–128 (TID) coordinates substrate. Asp128 acts as the Proton acceptor in catalysis. Arg155 is an ADP binding site. Substrate contacts are provided by residues Arg163 and 170 to 172 (MGR). ADP is bound by residues 186 to 188 (GAE) and 214 to 216 (KAS). Residues Glu223, Arg247, and 253–256 (HVQR) each bind substrate.

Belongs to the phosphofructokinase type A (PFKA) family. ATP-dependent PFK group I subfamily. Prokaryotic clade 'B1' sub-subfamily. In terms of assembly, homotetramer. The cofactor is Mg(2+).

Its subcellular location is the cytoplasm. It carries out the reaction beta-D-fructose 6-phosphate + ATP = beta-D-fructose 1,6-bisphosphate + ADP + H(+). The protein operates within carbohydrate degradation; glycolysis; D-glyceraldehyde 3-phosphate and glycerone phosphate from D-glucose: step 3/4. With respect to regulation, allosterically activated by ADP and other diphosphonucleosides, and allosterically inhibited by phosphoenolpyruvate. In terms of biological role, catalyzes the phosphorylation of D-fructose 6-phosphate to fructose 1,6-bisphosphate by ATP, the first committing step of glycolysis. In Cytophaga hutchinsonii (strain ATCC 33406 / DSM 1761 / CIP 103989 / NBRC 15051 / NCIMB 9469 / D465), this protein is ATP-dependent 6-phosphofructokinase.